Reading from the N-terminus, the 1056-residue chain is Potassium transporter TRK1 (1056 aa).

At 1-46 the chain is on the cytoplasmic side; sequence MLYRVSGFYKRHTRNFTNIDYGYYIRNFIHHIASKIYPYAKVVLPN. A helical transmembrane segment spans residues 47–67; sequence FRAAHYFYILTLVILGSILVY. Topologically, residues 68-73 are extracellular; sequence PVKTCA. An intramembrane segment occupies 74–90; sequence YIDVLFFTAGASTQAGL. Topologically, residues 91 to 99 are extracellular; that stretch reads NTVNVNDLS. Residues 100 to 122 form a helical membrane-spanning segment; that stretch reads LYQQIVLYLLATLATPIFIHGSL. The Cytoplasmic portion of the chain corresponds to 123–622; the sequence is LFVRLYYFER…LGGIEYRAVK (500 aa). 3 disordered regions span residues 180-276, 290-350, and 404-571; these read REAE…IDPE, KNQE…EDED, and PWTS…SIEN. Over residues 186–203 the composition is skewed to low complexity; sequence SSSSPQSSSSQTSQPVST. Residues 236–245 are compositionally biased toward basic and acidic residues; that stretch reads EKIHFEEPQR. Residues 335 to 344 are compositionally biased toward polar residues; sequence PATNSVGTGN. The span at 412–423 shows a compositional bias: low complexity; it reads TLSNSSKKGSLS. Acidic residues-rich tracts occupy residues 428 to 449 and 469 to 487; these read DTED…SDIS and YEED…DDGE. Over residues 521–533 the composition is skewed to polar residues; it reads RSNTLDTPQQNTS. Positions 537–549 are enriched in basic residues; that stretch reads KIRKKAPKRKTPR. Positions 553-563 are enriched in polar residues; it reads NASFNQHSNVS. Residues 623–646 traverse the membrane as a helical segment; sequence LLIKIIVVYYVGFNIIPGVMLSIW. At 647–665 the chain is on the extracellular side; it reads IYCMPHYKNLMISSSISPA. Residues 666 to 682 lie within the membrane without spanning it; that stretch reads WWAFFTSQSSFNDLGLT. The Extracellular segment spans residues 683 to 693; that stretch reads LTSNSMMSFNQ. A helical membrane pass occupies residues 694-710; sequence NAFVQILCSFLIVIGNT. Topologically, residues 711 to 754 are cytoplasmic; it reads GFPILLRFIIWVMFKTARPLSLYKESLGFLLDHPRRCFTLLFPS. Residues 755–778 traverse the membrane as a helical segment; sequence VPTWWLFFILVVLNGFDLVIFCIL. At 779–793 the chain is on the extracellular side; sequence DLHDDTFKGVDMGYR. Residues 794-810 lie within the membrane without spanning it; the sequence is VLNGLFQAFCTRTVGFS. The Extracellular portion of the chain corresponds to 811–817; that stretch reads VMDLSQL. A helical membrane pass occupies residues 818–841; sequence HAATQVSYLIMMYISVLPIAISVR. At 842–874 the chain is on the cytoplasmic side; sequence RTNVYEEQSLGVYAKENAEGVDESAPSNYVGSH. A helical membrane pass occupies residues 875 to 896; it reads LRNQLSYDLWYICLGLFIICIA. At 897–909 the chain is on the extracellular side; the sequence is EGKRLKEQDLRFS. The stretch at 910–928 is an intramembrane region; sequence IFAVLFEIVSAYGTVGMSM. The Extracellular portion of the chain corresponds to 929–942; it reads GYPGVDCSLSGEFN. The chain crosses the membrane as a helical span at residues 943–965; sequence VISKLVIIAMMIRGRHRGLPYTI. Over 966–1056 the chain is Cytoplasmic; the sequence is DRAIMLPNAA…RYVVRTVSEV (91 aa).

Belongs to the TrkH potassium transport family.

The protein resides in the cell membrane. The catalysed reaction is K(+)(in) = K(+)(out). It catalyses the reaction chloride(in) = chloride(out). TRK1-mediated chloride conductance is blocked by 4,4'-diisothiocyanatostilbene-2,2'-disulfonic acid. Potassium transporter that mediates K(+) influx, as well as Cl(-) efflux as a secondary function. TRK1 is the major K(+) uptake transporter that regulates membrane potential and intracellular pH. The TRK1-mediated Cl(-) efflux should serve as a Cl(-) detoxification route and may play a role in sustaining C.albicans on mammalian epithelial surfaces, or in physiological saline solutions such as saliva. Its function is as follows. Mediates candidacidal activities of cysteine-free peptides, but not of defensins. The hallmark of salivary gland-secreted histatin-5 (Hst 5) killing of C.albicans is the rapid efflux of cellular ATP and other small nucleotides and ions from the cell as well as concurrent intracellular uptake of propidium iodide (PI). TRK1 is the channel for Hst 5-induced killing and histatin-5 may directly or indirectly alter TRK1 function, allowing the efflux of larger anions, including ATP, and the influx of small cationic dyes, such as PI. The polypeptide is Potassium transporter TRK1 (Candida albicans (strain SC5314 / ATCC MYA-2876) (Yeast)).